The following is a 361-amino-acid chain: Alanine racemase (361 aa).

Residue K34 is the Proton acceptor; specific for D-alanine of the active site. K34 is modified (N6-(pyridoxal phosphate)lysine). R129 contributes to the substrate binding site. Catalysis depends on Y254, which acts as the Proton acceptor; specific for L-alanine. M302 serves as a coordination point for substrate.

It belongs to the alanine racemase family. Requires pyridoxal 5'-phosphate as cofactor.

It carries out the reaction L-alanine = D-alanine. The enzyme catalyses L-serine = D-serine. It functions in the pathway amino-acid biosynthesis; D-alanine biosynthesis; D-alanine from L-alanine: step 1/1. In terms of biological role, catalyzes the interconversion of L-alanine and D-alanine. Likely plays an important role in supplying D-alanine, which is an indispensable constituent in the biosynthesis of bacterial cell-wall peptidoglycan. To a lesser extent, is also able to racemize L-serine and D-serine. Does not act on other proteinogenic amino-acids. The protein is Alanine racemase (alr1) of Vibrio cholerae serotype O1 (strain ATCC 39315 / El Tor Inaba N16961).